We begin with the raw amino-acid sequence, 79 residues long: Probable [Fe-S]-dependent transcriptional repressor (79 aa).

Iron-sulfur cluster-binding residues include Cys56, Cys61, Cys64, and Cys71.

The protein belongs to the FeoC family.

In terms of biological role, may function as a transcriptional regulator that controls feoABC expression. The protein is Probable [Fe-S]-dependent transcriptional repressor of Klebsiella pneumoniae (strain 342).